Here is a 290-residue protein sequence, read N- to C-terminus: ATP synthase gamma chain (290 aa).

It belongs to the ATPase gamma chain family. In terms of assembly, F-type ATPases have 2 components, CF(1) - the catalytic core - and CF(0) - the membrane proton channel. CF(1) has five subunits: alpha(3), beta(3), gamma(1), delta(1), epsilon(1). CF(0) has three main subunits: a, b and c.

Its subcellular location is the cell inner membrane. Its function is as follows. Produces ATP from ADP in the presence of a proton gradient across the membrane. The gamma chain is believed to be important in regulating ATPase activity and the flow of protons through the CF(0) complex. The chain is ATP synthase gamma chain from Dictyoglomus thermophilum (strain ATCC 35947 / DSM 3960 / H-6-12).